The following is a 95-amino-acid chain: Small ribosomal subunit protein uS19 (95 aa).

The protein belongs to the universal ribosomal protein uS19 family.

Functionally, protein S19 forms a complex with S13 that binds strongly to the 16S ribosomal RNA. This chain is Small ribosomal subunit protein uS19, found in Thermodesulfovibrio yellowstonii (strain ATCC 51303 / DSM 11347 / YP87).